A 585-amino-acid polypeptide reads, in one-letter code: Acetolactate synthase large subunit (585 aa).

Residue E60 coordinates thiamine diphosphate. FAD-binding positions include R162, 272 to 293 (HGTAYANFAVSECDLLIALGAR), and 315 to 334 (DIDPAEIGKNRIPQLAIISD). The tract at residues 407 to 486 (QHQMWAAQFL…IKIFIINNQW (80 aa)) is thiamine pyrophosphate binding. Mg(2+) is bound by residues D457 and N484.

Belongs to the TPP enzyme family. Dimer of large and small chains. It depends on Mg(2+) as a cofactor. Thiamine diphosphate serves as cofactor.

The protein resides in the plastid. It localises to the chloroplast. It catalyses the reaction 2 pyruvate + H(+) = (2S)-2-acetolactate + CO2. It participates in amino-acid biosynthesis; L-isoleucine biosynthesis; L-isoleucine from 2-oxobutanoate: step 1/4. It functions in the pathway amino-acid biosynthesis; L-valine biosynthesis; L-valine from pyruvate: step 1/4. The protein is Acetolactate synthase large subunit (ilvB) of Cyanidium caldarium (Red alga).